The sequence spans 358 residues: Peptide chain release factor 1 (358 aa).

N5-methylglutamine is present on Gln-233.

This sequence belongs to the prokaryotic/mitochondrial release factor family. Methylated by PrmC. Methylation increases the termination efficiency of RF1.

Its subcellular location is the cytoplasm. Its function is as follows. Peptide chain release factor 1 directs the termination of translation in response to the peptide chain termination codons UAG and UAA. This Lysinibacillus sphaericus (strain C3-41) protein is Peptide chain release factor 1.